A 583-amino-acid polypeptide reads, in one-letter code: MSNKTTEATKTTKVKKVLSVVAGLGLLAGCSTLPDDTNPEAISSYAPAPSGQEAPTPTDGQPSDLLLRDFFTASAHPLRDHQAAKKFLTGGMQGRWQSDAPTMVLDRIDISSEGPGNDSKITYRVRGNIVGTLGVGGVFDPQYTAFETSYEMQNVDGQWRISNLPNVVVLDRQDFVSTYRARNIYFPDLNGRALVSDRRWIYTGQQSTAASLVSLLVAGPQDRLKKAVRNLVPEDATAQVSNDGGGDPAVHFTGLQELSADARRLLAAQVVWTLAGSEVRGPYELTADGTPMTDDMHGKWLVQDLSQYDPNVQVQTPLRAVSGGDVYQQDGARAKKLEGWLSQQYVESVALSPRDEVYAAVTGRGDAPRQLMIGAKGDQPVSSVQANSLTRPTWGLDATSAYVVADGERITEITRNPESGIVGERKVDSSTMAMVDGKDKRISVFRVSHDGARAVMIVNGRVYVVTLDTTDDGTKRLGAPVEIGHAVGDTAVSADWSDDGSVLVGTRANDAPVWDIEVDGSYSQQITGRNLSAPVVSVATDGSKIYVTDANALMQFDVTSEESRFWREVPTMQGKRATPVLAD.

Positions 1 to 29 are cleaved as a signal peptide; sequence MSNKTTEATKTTKVKKVLSVVAGLGLLAG. The N-palmitoyl cysteine moiety is linked to residue Cys-30. Cys-30 is lipidated: S-diacylglycerol cysteine. Positions 38–63 are disordered; sequence NPEAISSYAPAPSGQEAPTPTDGQPS.

It belongs to the LpqB lipoprotein family.

The protein resides in the cell membrane. This Corynebacterium jeikeium (strain K411) protein is Lipoprotein LpqB.